The chain runs to 347 residues: MDYKTSGVDIEAGREFVSEIKQAVEGTHTSNVIEGIGGFGGLFRIPIDSFKKPVLVSGTDGVGTKLELAQSKNFHFEVGIDLVAMCMNDIITSGAKPLFFLDYIATGKLDKNQLLRVVKGISHGCGENNCSLLGGETAEMPGFYSKNKYDLAGFCVGIVDEDKLINGKKVSENDLIIALKSNGVHSNGFSLVRKIIQNNNQIDKEFEKVFHLNFYDELLKPTKIYNNVINQMLTENIEIKAMSHITGGGIPENLPRCMPSDFIPYVDTGSWEIPIIFKFLKEKGSIPEKDFWNTFNLGVGFCLIIDKQFKDPILNICKDNEIDSWEIGKIVRKNDSTISKFLPEILT.

This sequence belongs to the AIR synthase family.

The protein localises to the cytoplasm. It catalyses the reaction 2-formamido-N(1)-(5-O-phospho-beta-D-ribosyl)acetamidine + ATP = 5-amino-1-(5-phospho-beta-D-ribosyl)imidazole + ADP + phosphate + H(+). Its pathway is purine metabolism; IMP biosynthesis via de novo pathway; 5-amino-1-(5-phospho-D-ribosyl)imidazole from N(2)-formyl-N(1)-(5-phospho-D-ribosyl)glycinamide: step 2/2. This is Phosphoribosylformylglycinamidine cyclo-ligase from Prochlorococcus marinus (strain AS9601).